Consider the following 194-residue polypeptide: Acireductone dioxygenase 1 (194 aa).

The segment at 1–21 (MEAWYMDDSADDQRKPHHRSP) is disordered. His-87, His-89, Glu-93, and His-132 together coordinate Fe(2+). 4 residues coordinate Ni(2+): His-87, His-89, Glu-93, and His-132.

The protein belongs to the acireductone dioxygenase (ARD) family. Fe(2+) serves as cofactor. It depends on Ni(2+) as a cofactor.

It is found in the cytoplasm. It localises to the nucleus. The catalysed reaction is 1,2-dihydroxy-5-(methylsulfanyl)pent-1-en-3-one + O2 = 4-methylsulfanyl-2-oxobutanoate + formate + 2 H(+). It carries out the reaction 1,2-dihydroxy-5-(methylsulfanyl)pent-1-en-3-one + O2 = 3-(methylsulfanyl)propanoate + CO + formate + 2 H(+). It functions in the pathway amino-acid biosynthesis; L-methionine biosynthesis via salvage pathway; L-methionine from S-methyl-5-thio-alpha-D-ribose 1-phosphate: step 5/6. In terms of biological role, catalyzes 2 different reactions between oxygen and the acireductone 1,2-dihydroxy-3-keto-5-methylthiopentene (DHK-MTPene) depending upon the metal bound in the active site. Fe-containing acireductone dioxygenase (Fe-ARD) produces formate and 2-keto-4-methylthiobutyrate (KMTB), the alpha-ketoacid precursor of methionine in the methionine recycle pathway. Ni-containing acireductone dioxygenase (Ni-ARD) produces methylthiopropionate, carbon monoxide and formate, and does not lie on the methionine recycle pathway. This chain is Acireductone dioxygenase 1, found in Physcomitrium patens (Spreading-leaved earth moss).